The following is an 858-amino-acid chain: Neurofilament medium polypeptide (858 aa).

Ser2 carries the post-translational modification N-acetylserine. The tract at residues 2–99 is head; it reads SYTMEPLGNP…KLSRSNEKEQ (98 aa). The tract at residues 22 to 57 is disordered; the sequence is ATYSRASASPSSGFRSQSWSRGSGSTVSSSYKRTNL. Residues 30–54 show a composition bias toward low complexity; that stretch reads SPSSGFRSQSWSRGSGSTVSSSYKR. O-linked (GlcNAc) threonine glycosylation occurs at Thr47. The region spanning 96–407 is the IF rod domain; the sequence is EKEQLQGLND…KLLEGEETRF (312 aa). The coil 1A stretch occupies residues 100 to 131; the sequence is LQGLNDRFAGYIEKVHYLEQQNKEIEAELAAL. Residues 132 to 144 form a linker 1 region; that stretch reads RQKHAGRAQLGDA. Positions 145-243 are coil 1B; that stretch reads YEQELRELRG…EEEVAELLAQ (99 aa). The interval 244–260 is linker 12; it reads LQASHATVERKDYLKTD. A coil 2A region spans residues 261-282; that stretch reads LTTALKEIRAQLECQSDHNMHQ. The segment at 283–286 is linker 2; the sequence is AEEW. Residues 287-407 are coil 2B; sequence FKCRYAKLTE…KLLEGEETRF (121 aa). The tail stretch occupies residues 408–858; it reads SAFSGSITGP…SHAVVKEIKE (451 aa). The O-linked (GlcNAc) threonine glycan is linked to Thr427. The tract at residues 478–788 is disordered; that stretch reads AAKAQEEEQE…VVTNGLDVSP (311 aa). Composition is skewed to acidic residues over residues 484–500 and 509–524; these read EEQE…EEEA and AAEE…EEEE. The segment covering 525-541 has biased composition (basic and acidic residues); the sequence is AAKSDAAEEGGSKKEEI. Over residues 542–555 the composition is skewed to acidic residues; it reads EEKEEGEEAEEEEA. The segment covering 556-572 has biased composition (basic and acidic residues); the sequence is EAKGKAEEAGAKVEKVK. A compositionally biased stretch (pro residues) spans 576-586; it reads AKSPPKSPPKS. The span at 590 to 601 shows a compositional bias: low complexity; that stretch reads EQAKAVQKAAAE. Positions 602 to 623 are enriched in basic and acidic residues; that stretch reads VGKDQKAEKAAEKAAKEEKAAS. The span at 624-637 shows a compositional bias: low complexity; that stretch reads PEKPATPKVTSPEK. Basic and acidic residues-rich tracts occupy residues 651–664 and 675–727; these read ITPE…KPTT and ASPE…KAVV. Over residues 728–743 the composition is skewed to low complexity; that stretch reads EESITVTKVTKVTAEV. The segment covering 744–771 has biased composition (basic and acidic residues); that stretch reads EVSKEARKEDIAVNGEVEEKKDEAKEKE.

The protein belongs to the intermediate filament family. Post-translationally, there are a number of repeats of the tripeptide K-S-P, NFM is phosphorylated on a number of the serines in this motif. It is thought that phosphorylation of NFM results in the formation of interfilament cross bridges that are important in the maintenance of axonal caliber. Phosphorylation seems to play a major role in the functioning of the larger neurofilament polypeptides (NF-M and NF-H), the levels of phosphorylation being altered developmentally and coincident with a change in the neurofilament function.

The protein resides in the cytoplasm. It localises to the cytoskeleton. Its subcellular location is the cell projection. It is found in the axon. In terms of biological role, neurofilaments usually contain three intermediate filament proteins: NEFL, NEFM, and NEFH which are involved in the maintenance of neuronal caliber. May additionally cooperate with other neuronal intermediate filament proteins to form neuronal filamentous networks. This chain is Neurofilament medium polypeptide (NEFM), found in Gallus gallus (Chicken).